A 483-amino-acid polypeptide reads, in one-letter code: Scarecrow-like protein 26 (483 aa).

The region spanning 95-477 is the GRAS domain; it reads KTDESKGLRL…RRLVSASFWA (383 aa). The tract at residues 102–165 is leucine repeat I (LRI); sequence LRLVHLLVAA…SKLLERDSVL (64 aa). Residues 184 to 251 form a VHIID region; the sequence is FELLQNMSPY…PSAQHLRITA (68 aa). Positions 215–219 match the VHIID motif; the sequence is IHIVD. Positions 267 to 299 are leucine repeat II (LRII); it reads ETGRRLTAFADSIGQPFSYQHCKLDTNAFSTSS. The tract at residues 308 to 400 is PFYRE; it reads VVINCMLHLP…RVFIGPWVAN (93 aa). Positions 403–477 are SAW; sequence TRITANDAEV…RRLVSASFWA (75 aa).

Belongs to the GRAS family. In terms of tissue distribution, expressed in seedlings, roots, leaves and flowers.

It is found in the nucleus. Probable transcription factor involved in plant development. This chain is Scarecrow-like protein 26 (SCL26), found in Arabidopsis thaliana (Mouse-ear cress).